Reading from the N-terminus, the 448-residue chain is Hydroxycinnamoyl-CoA:piscidic acid hydroxycinnamoyltransferase (448 aa).

Catalysis depends on proton acceptor residues His-153 and Asp-395.

Belongs to the plant acyltransferase family. As to expression, highly expressed in root and rhizome. Expressed in senescent leaf and callus tissues. Expressed in detached leaf treated for 18 hours with ethephon, methyl jasmonate, salicylic acid or illuminated for 24 hours with UV light. Not expressed in mature leaf. Expressed at low levels in leaves and flowers.

It carries out the reaction (2R,3S)-piscidate + (E)-4-coumaroyl-CoA = cimicifugate K + CoA. The catalysed reaction is (2R,3S)-piscidate + (E)-caffeoyl-CoA = cimicifugate D + CoA. It catalyses the reaction (2R,3S)-piscidate + (E)-sinapoyl-CoA = cimicifugate J + CoA. The enzyme catalyses (2R,3S)-piscidate + (E)-feruloyl-CoA = cimicifugate E + CoA. The protein operates within phenylpropanoid metabolism. Its function is as follows. Catalyzes the formation of cimicifugic acids. Uses hydroxycinnamoyl-CoA thioesters as hydroxycinnamoyl donor substrates. Has a strict specificity for piscidic acid as an acceptor substrate as none of the various other acceptors tested including 4-hydroxyphenyllactic acid, malate, spermidine or tetrahydroxyhexanedioic acid are substrates. Donor substrates include 4-coumaroyl-CoA, caffeoyl-CoA, sinapoyl-CoA and feruloyl-CoA. No activity with cinnamoyl-CoA, isoferuloyl-CoA, 3,4-dimethoxycinnamoyl-CoA or 3,4-dihydroxybenzoyl-CoA as donors. In the reverse reaction with fukinolic acid and CoA as substrates, a formation of fukiic acid is evident. Hence, fukiic acid may also serve as an acceptor substrate. Involved in the biosynthesis of cimicifugic and possibly fukinolic acids. The protein is Hydroxycinnamoyl-CoA:piscidic acid hydroxycinnamoyltransferase of Actaea racemosa (Black cohosh).